The primary structure comprises 90 residues: U-scoloptoxin(15)-Sa3a (90 aa).

Residues 1-18 form the signal peptide; sequence MKMVYLGLFLIITSCVIS.

It belongs to the scoloptoxin-15 family. Contains 3 disulfide bonds. Expressed by the venom gland.

The protein localises to the secreted. In Scolopendra alternans (Florida Keys giant centipede), this protein is U-scoloptoxin(15)-Sa3a.